The following is a 164-amino-acid chain: Large ribosomal subunit protein uL10 (164 aa).

This sequence belongs to the universal ribosomal protein uL10 family. In terms of assembly, part of the ribosomal stalk of the 50S ribosomal subunit. The N-terminus interacts with L11 and the large rRNA to form the base of the stalk. The C-terminus forms an elongated spine to which L12 dimers bind in a sequential fashion forming a multimeric L10(L12)X complex.

Functionally, forms part of the ribosomal stalk, playing a central role in the interaction of the ribosome with GTP-bound translation factors. In Helicobacter pylori (strain G27), this protein is Large ribosomal subunit protein uL10.